Here is a 554-residue protein sequence, read N- to C-terminus: Alpha-taxilin (554 aa).

The tract at residues 1–66 is disordered; that stretch reads MKNQDKKNGP…ARAKAAQPGA (66 aa). The residue at position 71 (Ser-71) is a Phosphoserine. The tract at residues 85-166 is disordered; that stretch reads YCVDNNQGGP…RRPQEKKKAK (82 aa). Residues 91-103 show a composition bias toward low complexity; the sequence is QGGPAEEGAQGEP. Basic and acidic residues predominate over residues 143-158; that stretch reads EEIRASDEVGDRDHRR. Residues 186–491 are a coiled coil; that stretch reads EEKLAALCKK…NKRVQDLTAG (306 aa). Residues 492 to 554 form a disordered region; it reads GITDIGSERR…GPGEPTPATA (63 aa). Phosphoserine is present on residues Ser-515 and Ser-523.

This sequence belongs to the taxilin family. In terms of assembly, binds to the C-terminal coiled coil region of syntaxin family members STX1A, STX3A and STX4A, but not when these proteins are complexed with SNAP25, VAMP2 or STXBP1, suggesting that it interacts with syntaxins that do not form the SNARE complex.

Its function is as follows. May be involved in intracellular vesicle traffic and potentially in calcium-dependent exocytosis in neuroendocrine cells. This chain is Alpha-taxilin (Txlna), found in Mus musculus (Mouse).